The chain runs to 581 residues: Nicotinic acid-CoA ligase pyr1 (581 aa).

204–215 (MFLTSGTSGLPK) lines the AMP pocket. Positions 477-555 (EIEGILLKDP…DEIPRTGIGK (79 aa)) are AMP-binding.

This sequence belongs to the ATP-dependent AMP-binding enzyme family.

The catalysed reaction is nicotinate + ATP + CoA = nicotinyl-CoA + AMP + diphosphate. Its pathway is secondary metabolite biosynthesis; terpenoid biosynthesis. Functionally, nicotinic acid-CoA ligase; part of the gene cluster that mediates the biosynthesis of pyripyropene A, a specific human acyl-coenzyme A:cholesterol acyltransferase 2 inhibitor. The first step of the pathway is the synthesis of nicotinyl-CoA from nicotinic acid by the nicotinic acid-CoA ligase pyr1. Nicotinyl-CoA is then a substrate of polyketide synthase pyr2 to produce 4-hydroxy-6-(3-pyridinyl)-2H-pyran-2-one (HPPO) which is further prenylated by the polyprenyl transferase pyr6 to yield farnesyl-HPPO. The next steps consist of an epoxidation of farnesyl-HPPO to epoxyfarnesyl-HPPO by FAD-dependent monooxygenase pyr5 and a cyclization of the terpenoid portion by the terpene cyclase pyr4 to yield deacetyl-pyripyropene E. The 2 cytochrome P450 monooxygenases pyr3 and pyr9, and the 2 acetyltransferases pyr7 and pyr8 are involved in the conversion of deacetyl-pyripyropene E into pyripyropene A through several cycles of oxidation and acetylation steps. Pyr7 acetylates deacetyl-pyripyropene E to pyripyropene E which is oxidized to 11-deacetyl-pyripyropene O by pyr3, which is in turn acetylated into pyripyropene O by pyr8. Pyripyropene O is then oxidized to deacetyl-pyripyropene A by pyr9. Deacetyl-pyripyropene A is finally acetylated to pyripyropene A by pyr8. The sequence is that of Nicotinic acid-CoA ligase pyr1 from Aspergillus fumigatus (strain ATCC MYA-4609 / CBS 101355 / FGSC A1100 / Af293) (Neosartorya fumigata).